Reading from the N-terminus, the 194-residue chain is Peptidyl-tRNA hydrolase (194 aa).

Tyr17 is a tRNA binding site. The active-site Proton acceptor is His22. TRNA contacts are provided by Tyr68, Asn70, and Asn116.

It belongs to the PTH family. In terms of assembly, monomer.

It is found in the cytoplasm. The enzyme catalyses an N-acyl-L-alpha-aminoacyl-tRNA + H2O = an N-acyl-L-amino acid + a tRNA + H(+). Functionally, hydrolyzes ribosome-free peptidyl-tRNAs (with 1 or more amino acids incorporated), which drop off the ribosome during protein synthesis, or as a result of ribosome stalling. In terms of biological role, catalyzes the release of premature peptidyl moieties from peptidyl-tRNA molecules trapped in stalled 50S ribosomal subunits, and thus maintains levels of free tRNAs and 50S ribosomes. This is Peptidyl-tRNA hydrolase from Pseudomonas putida (strain GB-1).